A 341-amino-acid chain; its full sequence is L-threonine 3-dehydrogenase (341 aa).

Cys-38 provides a ligand contact to Zn(2+). Catalysis depends on charge relay system residues Thr-40 and His-43. Zn(2+)-binding residues include His-63, Glu-64, Cys-93, Cys-96, Cys-99, and Cys-107. Residues Ile-175, Asp-195, Arg-200, 262-264 (LGI), and 286-287 (IY) contribute to the NAD(+) site.

This sequence belongs to the zinc-containing alcohol dehydrogenase family. In terms of assembly, homotetramer. It depends on Zn(2+) as a cofactor.

The protein localises to the cytoplasm. The enzyme catalyses L-threonine + NAD(+) = (2S)-2-amino-3-oxobutanoate + NADH + H(+). Its pathway is amino-acid degradation; L-threonine degradation via oxydo-reductase pathway; glycine from L-threonine: step 1/2. In terms of biological role, catalyzes the NAD(+)-dependent oxidation of L-threonine to 2-amino-3-ketobutyrate. The protein is L-threonine 3-dehydrogenase of Shewanella loihica (strain ATCC BAA-1088 / PV-4).